The following is a 313-amino-acid chain: Sorting nexin-20 (313 aa).

The segment at 1–61 is disordered; the sequence is MASPQHPGGP…MTTRELQEHW (61 aa). At serine 3 the chain carries Phosphoserine. Positions 29-38 are enriched in pro residues; it reads PPGPDLPCPG. A compositionally biased stretch (polar residues) spans 45–55; that stretch reads GPTSNSNMTTR. The 118-residue stretch at 71–188 folds into the PX domain; that stretch reads VRLLFEIASA…DFLTRPELCE (118 aa). Arginine 113, serine 115, lysine 140, and arginine 154 together coordinate a 1,2-diacyl-sn-glycero-3-phospho-(1D-myo-inositol-3-phosphate).

It belongs to the sorting nexin family. In terms of assembly, interacts with SELPLG. Interaction with SELPLG is controversial.

The protein resides in the early endosome membrane. It is found in the cell membrane. It localises to the cytoplasm. Its subcellular location is the nucleus. May play a role in cellular vesicle trafficking. Has been proposed to function as a sorting protein that targets SELPLG into endosomes, but has no effect on SELPLG internalization from the cell surface, or on SELPLG-mediated cell-cell adhesion. This chain is Sorting nexin-20 (Snx20), found in Rattus norvegicus (Rat).